The chain runs to 229 residues: 5'-methylthioadenosine/S-adenosylhomocysteine nucleosidase (229 aa).

Glu12 serves as the catalytic Proton acceptor. Residues Gly78, Ile152, and Met173–Glu174 each bind substrate. Residue Asp197 is the Proton donor of the active site.

Belongs to the PNP/UDP phosphorylase family. MtnN subfamily.

The enzyme catalyses S-adenosyl-L-homocysteine + H2O = S-(5-deoxy-D-ribos-5-yl)-L-homocysteine + adenine. It catalyses the reaction S-methyl-5'-thioadenosine + H2O = 5-(methylsulfanyl)-D-ribose + adenine. It carries out the reaction 5'-deoxyadenosine + H2O = 5-deoxy-D-ribose + adenine. The protein operates within amino-acid biosynthesis; L-methionine biosynthesis via salvage pathway; S-methyl-5-thio-alpha-D-ribose 1-phosphate from S-methyl-5'-thioadenosine (hydrolase route): step 1/2. Its function is as follows. Catalyzes the irreversible cleavage of the glycosidic bond in both 5'-methylthioadenosine (MTA) and S-adenosylhomocysteine (SAH/AdoHcy) to adenine and the corresponding thioribose, 5'-methylthioribose and S-ribosylhomocysteine, respectively. Also cleaves 5'-deoxyadenosine, a toxic by-product of radical S-adenosylmethionine (SAM) enzymes, into 5-deoxyribose and adenine. The chain is 5'-methylthioadenosine/S-adenosylhomocysteine nucleosidase from Histophilus somni (strain 2336) (Haemophilus somnus).